The following is a 112-amino-acid chain: MGLKSYLLGRNGEKRAEAFLIKNGFTIREKNFHSRFGEIDIIAQKDGILHFIEVKLSEKSDPVYMITQKKMEKLLLAIEFYMMKNGLELPYQIDGVLIKKNTLEMIENLTIM.

This sequence belongs to the UPF0102 family.

The protein is UPF0102 protein NIS_1551 of Nitratiruptor sp. (strain SB155-2).